An 825-amino-acid chain; its full sequence is MTKKQENETSKELGMDNKKTSGKSGKLKISVSAIRKGEKKTEGKRSNTRRRANNHSNDHSKRRRPAAQDLLKDLKQKQRADEARLDQESKAAKQEYKKSLNKAEASESKPVVKKVESVEKPAETAAEAPKVRGPKILKPSPARLKQNQANSEKPAAKPSSSRRPSSRPSFTEAPMPENKEGRRRKSGKPGRKGQNSYADQGRGANSNRSEQRKRKNKKHQSAPQVKKQVTQRKDRPLPESFEYEVGMNAQDLGKILHREPAEIVKKLFMLGIMINQNLSLDKDTIELLAADYGIEAVEKVHEDISDIDNIFAQEMEESKNSENQVVRPPVVTIMGHVDHGKTTLLDRLRHTRVSEHEAGGITQNIGAYQVRINDRLITFLDTPGHAAFSSMRARGAEITDIVVLIVAADDGVMPQTIEAIDHAKSAGVPIIVAINKMDRPGANPAHVTEQLMQYELIPENYGGSTIFVNISAKTGMGIDELLENIILEADMLELKADPKQKAIGTVVEARLSRGKGPVADVLIQQGTLRVGDPIVVGDTFGRVRTMTNDKGHQVKKATPSMPVEITGLNDVPESADKLVVFADEKTARAVGEARAQQSLQKQRENVQHVTLDNLFDTMKRESMKSVDIVLKADVQGSAEALAQSFQKIDVEGVRVNIIHSGVGAINESDVTLASASNALIIGFNVRPTATAKSQAAQEGVDIRLYSIIYKAIDDVKAAMQGMLEPTYEEKVIGNLTVRETWKVSKIGTIAGAFVDNGYVTRESGIRVIRDGVVKYDGKVASLRRFKDDVKEVKAGFDCGLTIENFNDIKEGDELEAYEMQEVKPS.

Basic and acidic residues-rich tracts occupy residues 1–19, 35–45, 70–98, and 113–122; these read MTKK…DNKK, RKGEKKTEGKR, LLKD…EYKK, and KKVESVEKPA. The segment at 1–239 is disordered; that stretch reads MTKKQENETS…TQRKDRPLPE (239 aa). Residues 158–169 show a composition bias toward low complexity; that stretch reads PSSSRRPSSRPS. Over residues 181–191 the composition is skewed to basic residues; it reads GRRRKSGKPGR. Residues 194 to 208 show a composition bias toward polar residues; it reads QNSYADQGRGANSNR. The span at 211 to 220 shows a compositional bias: basic residues; the sequence is QRKRKNKKHQ. In terms of domain architecture, tr-type G spans 326–495; that stretch reads VRPPVVTIMG…ILEADMLELK (170 aa). The G1 stretch occupies residues 335 to 342; that stretch reads GHVDHGKT. Residue 335-342 participates in GTP binding; the sequence is GHVDHGKT. Positions 360 to 364 are G2; that stretch reads GITQN. Residues 381–384 form a G3 region; that stretch reads DTPG. Residues 381–385 and 435–438 each bind GTP; these read DTPGH and NKMD. The G4 stretch occupies residues 435-438; sequence NKMD. The interval 471 to 473 is G5; the sequence is SAK.

The protein belongs to the TRAFAC class translation factor GTPase superfamily. Classic translation factor GTPase family. IF-2 subfamily.

It localises to the cytoplasm. Functionally, one of the essential components for the initiation of protein synthesis. Protects formylmethionyl-tRNA from spontaneous hydrolysis and promotes its binding to the 30S ribosomal subunits. Also involved in the hydrolysis of GTP during the formation of the 70S ribosomal complex. The polypeptide is Translation initiation factor IF-2 (Lactobacillus delbrueckii subsp. bulgaricus (strain ATCC 11842 / DSM 20081 / BCRC 10696 / JCM 1002 / NBRC 13953 / NCIMB 11778 / NCTC 12712 / WDCM 00102 / Lb 14)).